Consider the following 848-residue polypeptide: Trimethylamine-N-oxide reductase 1 (848 aa).

A signal peptide (tat-type signal) is located at residues 1-39 (MNNNDLFQASRRRFLAQLGGLTVAGMLGTSLLTPRRATA). A Mo-bis(molybdopterin guanine dinucleotide)-binding site is contributed by Ser-191.

This sequence belongs to the prokaryotic molybdopterin-containing oxidoreductase family. Requires Mo-bis(molybdopterin guanine dinucleotide) as cofactor. Post-translationally, predicted to be exported by the Tat system. The position of the signal peptide cleavage has not been experimentally proven.

The protein localises to the periplasm. The enzyme catalyses trimethylamine + 2 Fe(III)-[cytochrome c] + H2O = trimethylamine N-oxide + 2 Fe(II)-[cytochrome c] + 3 H(+). Functionally, reduces trimethylamine-N-oxide (TMAO) into trimethylamine; an anaerobic reaction coupled to energy-yielding reactions. This is Trimethylamine-N-oxide reductase 1 (torA) from Escherichia coli O6:H1 (strain CFT073 / ATCC 700928 / UPEC).